We begin with the raw amino-acid sequence, 349 residues long: Protein arginine N-methyltransferase 6 (349 aa).

An SAM-dependent MTase PRMT-type domain is found at 17-324 (DYMYFDSYSD…EENSRHICIR (308 aa)). 5 residues coordinate S-adenosyl-L-methionine: His-30, Arg-39, Gly-63, Glu-85, and Glu-114. Active-site residues include Glu-128 and Glu-137.

Belongs to the class I-like SAM-binding methyltransferase superfamily. Protein arginine N-methyltransferase family. PRMT6 subfamily.

Its subcellular location is the nucleus. The enzyme catalyses L-arginyl-[protein] + 2 S-adenosyl-L-methionine = N(omega),N(omega)-dimethyl-L-arginyl-[protein] + 2 S-adenosyl-L-homocysteine + 2 H(+). In terms of biological role, arginine methyltransferase that can catalyze the formation of both omega-N monomethylarginine (MMA) and asymmetrical dimethylarginine (aDMA), with a strong preference for the formation of aDMA. Preferentially methylates arginyl residues present in a glycine and arginine-rich domain and displays preference for monomethylated substrates. Specifically mediates the asymmetric dimethylation of histone H3 'Arg-2' to form H3R2me2a. H3R2me2a represents a specific tag for epigenetic transcriptional repression and is mutually exclusive with methylation on histone H3 'Lys-4' (H3K4me2 and H3K4me3). Acts as a transcriptional repressor of various genes such as HOXA2, THBS1 and TP53. Repression of TP53 blocks cellular senescence. Also methylates histone H2A and H4 'Arg-3' (H2AR3me and H4R3me, respectively). Acts as a regulator of DNA base excision during DNA repair by mediating the methylation of DNA polymerase beta (POLB), leading to the stimulation of its polymerase activity by enhancing DNA binding and processivity. Methylates HMGA1. Regulates alternative splicing events. Acts as a transcriptional coactivator of a number of steroid hormone receptors including ESR1, ESR2, PGR and NR3C1. The polypeptide is Protein arginine N-methyltransferase 6 (prmt6) (Danio rerio (Zebrafish)).